Consider the following 165-residue polypeptide: uncharacterized protein (165 aa).

The segment at 1-36 is disordered; that stretch reads MTRLCLPRPEAREDPIPVPPRGLGAGEGSGSPVRPP. The helical transmembrane segment at 135-155 threads the bilayer; sequence LLLLMGLGPLLRACGMPLTLL.

It localises to the membrane. This is an uncharacterized protein from Homo sapiens (Human).